Consider the following 337-residue polypeptide: Heat-inducible transcription repressor HrcA (337 aa).

It belongs to the HrcA family.

Its function is as follows. Negative regulator of class I heat shock genes (grpE-dnaK-dnaJ and groELS operons). Prevents heat-shock induction of these operons. The chain is Heat-inducible transcription repressor HrcA from Kocuria rhizophila (strain ATCC 9341 / DSM 348 / NBRC 103217 / DC2201).